We begin with the raw amino-acid sequence, 524 residues long: General transcription factor IIF subunit 1 (524 aa).

Disordered stretches follow at residues 56-76 and 181-462; these read MYQEEEMPESGAGSEYNRKQR and RLKD…IQLT. Positions 242–257 are enriched in basic residues; it reads KPQKKVPAKGGKKKKR. Acidic residues predominate over residues 262 to 289; that stretch reads EALEDSDDGDFEGQEVDYMSDESSSDEE. Positions 290–307 are enriched in basic and acidic residues; the sequence is LPGKIKPAKEEEGPKGLD. 2 stretches are compositionally biased toward acidic residues: residues 308-327 and 347-358; these read EQSESSEESEEEKAEEEEGE and SDESETSEDSDI. A compositionally biased stretch (basic residues) spans 368–378; that stretch reads QKKKTPPKKDK. The span at 381–397 shows a compositional bias: low complexity; sequence GSNSSSRGNSRPGTPSP. Positions 436–459 are enriched in polar residues; the sequence is PQNTSGKSTPQPQSGKSTPSSGDI.

It belongs to the TFIIF alpha subunit family. Heterodimer of an alpha and a beta subunit. Post-translationally, phosphorylated on Ser and other residues by TAF1 and casein kinase II-like kinases.

It is found in the nucleus. Its function is as follows. TFIIF is a general transcription initiation factor that binds to RNA polymerase II and helps to recruit it to the initiation complex in collaboration with TFIIB. It promotes transcription elongation. This is General transcription factor IIF subunit 1 (gtf2f1) from Xenopus laevis (African clawed frog).